Reading from the N-terminus, the 829-residue chain is Cadherin-16 (829 aa).

A signal peptide spans 1-18 (MVPAWLWLLCFSVPQALV). Residues 19–786 (EVSPTTLHVE…MKGMPTKLSA (768 aa)) are Extracellular-facing. 6 Cadherin domains span residues 25–126 (LHVE…VPQF), 131–235 (YSAR…SIVE), 242–336 (EPVH…APVC), 341–449 (PPVS…APEF), 455–564 (GPVS…PPRL), and 569–665 (YEAD…APAL). Residues Asn-517, Asn-602, and Asn-722 are each glycosylated (N-linked (GlcNAc...) asparagine). The tract at residues 666 to 786 (PLAPMPSRHL…MKGMPTKLSA (121 aa)) is ectodomain G. A helical transmembrane segment spans residues 787–807 (VGILVGTLAAIGFFLILIFTH). Residues 808–829 (LALARKKDLDAPADNVPLKAAA) lie on the Cytoplasmic side of the membrane.

As to expression, kidney specific. Limited to the basolateral membranes of renal tubular epithelial cells.

The protein localises to the cell membrane. Functionally, cadherins are calcium-dependent cell adhesion proteins. They preferentially interact with themselves in a homophilic manner in connecting cells; cadherins may thus contribute to the sorting of heterogeneous cell types. The sequence is that of Cadherin-16 (CDH16) from Oryctolagus cuniculus (Rabbit).